A 495-amino-acid polypeptide reads, in one-letter code: Syntaphilin (495 aa).

The disordered stretch occupies residues 1-74 (MAMSLQGSRR…HGIKPPTPEQ (74 aa)). The segment covering 7-49 (GSRRASAGSRRRTSPPVSVRDAYGTSSLSSSSNSGSCKGSDSS) has biased composition (low complexity). The stretch at 79-161 (LQQKEVCIRH…VKNNLIDKDK (83 aa)) forms a coiled coil. A disordered region spans residues 191–244 (VAKEEGTGESAGGSPARSLTRSSTYTKLSDPAVCGDRQPGDPSNTSAEDGADSG). 2 positions are modified to phosphoserine: S200 and S204. The segment covering 207-217 (RSLTRSSTYTK) has biased composition (polar residues). T214 is modified (phosphothreonine). S219 bears the Phosphoserine mark. T235 carries the phosphothreonine modification. A helical membrane pass occupies residues 427–446 (YIVDLLAVVVPAVPTVAWLC).

As to quaternary structure, binds to STX1A. Interacts with DNM1; this interaction inhibits the binding of DNM1 to AMPH and DNM1-receptor-mediated endocytosis.

It localises to the membrane. The protein localises to the synapse. Its subcellular location is the synaptosome. In terms of biological role, inhibits SNARE complex formation by absorbing free STX1A. The polypeptide is Syntaphilin (Mus musculus (Mouse)).